The chain runs to 288 residues: ATP synthase gamma chain (288 aa).

The protein belongs to the ATPase gamma chain family. As to quaternary structure, F-type ATPases have 2 components, CF(1) - the catalytic core - and CF(0) - the membrane proton channel. CF(1) has five subunits: alpha(3), beta(3), gamma(1), delta(1), epsilon(1). CF(0) has three main subunits: a, b and c.

The protein localises to the cell membrane. Produces ATP from ADP in the presence of a proton gradient across the membrane. The gamma chain is believed to be important in regulating ATPase activity and the flow of protons through the CF(0) complex. This Shouchella clausii (strain KSM-K16) (Alkalihalobacillus clausii) protein is ATP synthase gamma chain.